The following is a 162-amino-acid chain: Phosphopantetheine adenylyltransferase (162 aa).

Residue T10 participates in substrate binding. ATP contacts are provided by residues 10 to 11 (TF) and H18. The substrate site is built by K42, L74, and R88. ATP-binding positions include 89–91 (GLR), E99, and 124–130 (YAFLSSS).

It belongs to the bacterial CoaD family. Homohexamer. It depends on Mg(2+) as a cofactor.

It localises to the cytoplasm. The catalysed reaction is (R)-4'-phosphopantetheine + ATP + H(+) = 3'-dephospho-CoA + diphosphate. It functions in the pathway cofactor biosynthesis; coenzyme A biosynthesis; CoA from (R)-pantothenate: step 4/5. Reversibly transfers an adenylyl group from ATP to 4'-phosphopantetheine, yielding dephospho-CoA (dPCoA) and pyrophosphate. In Methylococcus capsulatus (strain ATCC 33009 / NCIMB 11132 / Bath), this protein is Phosphopantetheine adenylyltransferase.